The sequence spans 545 residues: Monocarboxylate transporter 8 (545 aa).

Positions 1–98 (MALPSPASEE…VETRGTARGF (98 aa)) are disordered. Residue alanine 2 is modified to N-acetylalanine. The Cytoplasmic portion of the chain corresponds to 2 to 102 (ALPSPASEEA…GTARGFQPPE (101 aa)). 2 tandem repeats follow at residues 29-50 (PVPE…PVPV) and 51-72 (PPPE…PLPE). The 2 X 22 AA approximate tandem repeats stretch occupies residues 29–72 (PVPEPEPEPEPEPEPDPEPVPVPPPEPQPEPEPQPLPDPAPLPE). The span at 33–45 (PEPEPEPEPEPDP) shows a compositional bias: acidic residues. Residues 46 to 70 (EPVPVPPPEPQPEPEPQPLPDPAPL) are compositionally biased toward pro residues. Residues 103–123 (GGFGWIVVFAATWCNGSIFGI) form a helical membrane-spanning segment. The Extracellular portion of the chain corresponds to 124 to 149 (HNSVGILYSMLLEEEKEKNRQVEFQA). The helical transmembrane segment at 150-170 (AWVGALAMGMIFFCSPIVSIF) threads the bilayer. Topologically, residues 171–177 (TDRLGCR) are cytoplasmic. The helical transmembrane segment at 178 to 198 (ITATTGAAVAFIGLHTSSFTS) threads the bilayer. Residues 199–206 (SLSLRYFT) lie on the Extracellular side of the membrane. The helical transmembrane segment at 207–227 (YGILFGCGCSFAFQPSLVILG) threads the bilayer. The Cytoplasmic portion of the chain corresponds to 228–235 (HYFQRRLG). Residues 236 to 256 (LANGVVSAGSSIFSMSFPFLI) traverse the membrane as a helical segment. At 257 to 264 (KMLGDKIK) the chain is on the extracellular side. The chain crosses the membrane as a helical span at residues 265–285 (LAQTFQVLSTFMFVLTLLSLT). Residues 286–328 (YRPLLPSSQDTPSKRGAHTLRQRFLVQFRKYFNMRVFRQRTYR) lie on the Cytoplasmic side of the membrane. The helical transmembrane segment at 329 to 349 (IWAFGIAAAALGYFVPYVHLM) threads the bilayer. Over 350 to 362 (KYVEDKFKEIKET) the chain is Extracellular. Residues 363–383 (WVLLVCIGATSGLGRLVSGHI) form a helical membrane-spanning segment. Over 384–392 (SDSIPGLKK) the chain is Cytoplasmic. Residues 393–413 (IYLQVLSFLLLGLMSMMIPLC) form a helical membrane-spanning segment. Over 414–415 (RD) the chain is Extracellular. Residues 416 to 436 (FGGLIVVCLFLGLCDGFFITI) traverse the membrane as a helical segment. At 437–453 (MAPIAFELVGPMQASQA) the chain is on the cytoplasmic side. Residues 454-474 (IGYLLGMMALPMIAGPPIAGL) traverse the membrane as a helical segment. Residues 475–483 (LRNCFGDYH) lie on the Extracellular side of the membrane. The chain crosses the membrane as a helical span at residues 484–504 (VAFYFAGVPPIIGAVILFFVP). The Cytoplasmic segment spans residues 505–545 (LMHQRMFKKEQRDSSKDKMLSHDPDPNGELLPGSPTPEEPI). Residues 514–529 (EQRDSSKDKMLSHDPD) are compositionally biased toward basic and acidic residues. Residues 514 to 545 (EQRDSSKDKMLSHDPDPNGELLPGSPTPEEPI) form a disordered region. Residue threonine 540 is modified to Phosphothreonine.

The protein belongs to the major facilitator superfamily. Monocarboxylate porter (TC 2.A.1.13) family. Monomer. Homodimer. Homooligomer. As to expression, expressed in cerebral microvessels.

It is found in the cell membrane. The protein localises to the apical cell membrane. The catalysed reaction is 3,3',5-triiodo-L-thyronine(out) = 3,3',5-triiodo-L-thyronine(in). It carries out the reaction 3,3',5'-triiodo-L-thyronine(out) = 3,3',5'-triiodo-L-thyronine(in). It catalyses the reaction L-thyroxine(out) = L-thyroxine(in). The enzyme catalyses 3,3'-diiodo-L-thyronine(out) = 3,3'-diiodo-L-thyronine(in). Functionally, specific thyroid hormone transmembrane transporter, that mediates both uptake and efflux of thyroid hormones across the cell membrane independently of pH or a Na(+) gradient. Major substrates are the iodothyronines T3 and T4 and to a lesser extent rT3 and 3,3-diiodothyronine (3,3'-T2). Acts as an important mediator of thyroid hormone transport, especially T3, through the blood-brain barrier. The protein is Monocarboxylate transporter 8 (Slc16a2) of Mus musculus (Mouse).